Consider the following 302-residue polypeptide: MASLKDLRDRIASVKATQKITKAMQMVAAAKLHRAQEAVEAGRSYTQRMDALVTNISKDVDLVDAPLLMRGTGNDHVHLLVVCTAERGLCGAFNTQIARLAREHIQKLHAAGKTVKILTVGKKGADILLRDFKSLMIDHVDLRSVKKIGFAEAAKISKQLIDLFNEGAFDVCTLFYSRFVSVITQRPMALSLIPAGQNPVDEGQDFVDQAKSREVSQSAVYEYEPDVASLLNDLIPRHISVQIFQALLENVAGEMGAKMSAMDNASRNAGEMINKLTVTYNRQRQAQITTELIEIIAGAEAL.

The protein belongs to the ATPase gamma chain family. As to quaternary structure, F-type ATPases have 2 components, CF(1) - the catalytic core - and CF(0) - the membrane proton channel. CF(1) has five subunits: alpha(3), beta(3), gamma(1), delta(1), epsilon(1). CF(0) has three main subunits: a, b and c.

Its subcellular location is the cell inner membrane. Produces ATP from ADP in the presence of a proton gradient across the membrane. The gamma chain is believed to be important in regulating ATPase activity and the flow of protons through the CF(0) complex. This Bartonella bacilliformis (strain ATCC 35685 / KC583 / Herrer 020/F12,63) protein is ATP synthase gamma chain.